Here is a 206-residue protein sequence, read N- to C-terminus: ATP phosphoribosyltransferase (206 aa).

It belongs to the ATP phosphoribosyltransferase family. Short subfamily. In terms of assembly, heteromultimer composed of HisG and HisZ subunits.

It is found in the cytoplasm. The enzyme catalyses 1-(5-phospho-beta-D-ribosyl)-ATP + diphosphate = 5-phospho-alpha-D-ribose 1-diphosphate + ATP. The protein operates within amino-acid biosynthesis; L-histidine biosynthesis; L-histidine from 5-phospho-alpha-D-ribose 1-diphosphate: step 1/9. Its function is as follows. Catalyzes the condensation of ATP and 5-phosphoribose 1-diphosphate to form N'-(5'-phosphoribosyl)-ATP (PR-ATP). Has a crucial role in the pathway because the rate of histidine biosynthesis seems to be controlled primarily by regulation of HisG enzymatic activity. The chain is ATP phosphoribosyltransferase from Thermus thermophilus (strain ATCC 27634 / DSM 579 / HB8).